Consider the following 235-residue polypeptide: dITP/XTP pyrophosphatase (235 aa).

A substrate-binding site is contributed by 7–12 (STNPGK). Asp-70 functions as the Proton acceptor in the catalytic mechanism. Asp-70 provides a ligand contact to Mg(2+). Substrate is bound by residues Ser-71, 180–183 (FGYD), Lys-211, and 216–217 (HR).

It belongs to the HAM1 NTPase family. In terms of assembly, homodimer. The cofactor is Mg(2+).

It catalyses the reaction XTP + H2O = XMP + diphosphate + H(+). The catalysed reaction is dITP + H2O = dIMP + diphosphate + H(+). The enzyme catalyses ITP + H2O = IMP + diphosphate + H(+). Its function is as follows. Pyrophosphatase that catalyzes the hydrolysis of nucleoside triphosphates to their monophosphate derivatives, with a high preference for the non-canonical purine nucleotides XTP (xanthosine triphosphate), dITP (deoxyinosine triphosphate) and ITP. Seems to function as a house-cleaning enzyme that removes non-canonical purine nucleotides from the nucleotide pool, thus preventing their incorporation into DNA/RNA and avoiding chromosomal lesions. This chain is dITP/XTP pyrophosphatase, found in Anaeromyxobacter dehalogenans (strain 2CP-C).